We begin with the raw amino-acid sequence, 311 residues long: MSTSQTVHDVIIIGSGPAGYTAAIYAARAQLKPLVFEGTQFGGALMTTTEVENYPGFREGITGPELMDQMREQALRFRADLRMEDVDAVQLEGPVKTVVVGDETHQARAVILAMGAAARHLGVPGEEALTGMGVSTCATCDGFFFRDQDIVVVGGGDSAMEEATFLTRFARSVTLIHRRDEFRASKIMLERARANEKITFLTNTEITQIEGDPKVTGVRLRDTVTGEESKLDVTGVFVAIGHDPRSELVRGQVELDDEGYVKVQGRTTYTSLDGVFAAGDLVDHTYRQAITAAGSGCAASIDAERWLAEQD.

FAD-binding positions include 15–18 (SGPA), 37–44 (EGTQFGGA), Asn53, and Val86. The cysteines at positions 137 and 140 are disulfide-linked. 5 residues coordinate NADP(+): Ser158, His177, Arg183, Ile240, and Tyr260. FAD-binding positions include Asp280 and 287–290 (RQAI). Position 287 (Arg287) interacts with NADP(+).

This sequence belongs to the class-II pyridine nucleotide-disulfide oxidoreductase family. Homodimer. FAD is required as a cofactor.

It is found in the cytoplasm. It catalyses the reaction [thioredoxin]-dithiol + NADP(+) = [thioredoxin]-disulfide + NADPH + H(+). This is Thioredoxin reductase from Mycolicibacterium smegmatis (Mycobacterium smegmatis).